Reading from the N-terminus, the 118-residue chain is Putative pterin-4-alpha-carbinolamine dehydratase (118 aa).

This sequence belongs to the pterin-4-alpha-carbinolamine dehydratase family.

It catalyses the reaction (4aS,6R)-4a-hydroxy-L-erythro-5,6,7,8-tetrahydrobiopterin = (6R)-L-erythro-6,7-dihydrobiopterin + H2O. This chain is Putative pterin-4-alpha-carbinolamine dehydratase, found in Azotobacter vinelandii (strain DJ / ATCC BAA-1303).